The sequence spans 1579 residues: tRNA (guanosine(18)-2'-O)-methyltransferase TARBP1 (1579 aa).

An N-acetylmethionine modification is found at methionine 1. 5 residues coordinate S-adenosyl-L-homocysteine: valine 1501, glycine 1524, isoleucine 1544, glutamine 1546, and leucine 1553.

This sequence belongs to the class IV-like SAM-binding methyltransferase superfamily. RNA methyltransferase TrmH family. As to quaternary structure, monomer and homodimer.

The enzyme catalyses guanosine(18) in tRNA + S-adenosyl-L-methionine = 2'-O-methylguanosine(18) in tRNA + S-adenosyl-L-homocysteine + H(+). Its function is as follows. S-adenosyl-L-methionine-dependent 2'-O-ribose methyltransferase that catalyzes the formation of 2'-O-methylguanosine at position 18 (Gm18) in a subset of tRNA. Selectively mediates Gm18 methylation of tRNAGln-TTG/CTG and tRNASer-TGA/GCT. Gm18 modification can enhance the stability of modified tRNAs. This Mus musculus (Mouse) protein is tRNA (guanosine(18)-2'-O)-methyltransferase TARBP1.